The primary structure comprises 721 residues: Pentatricopeptide repeat-containing protein At3g49710 (721 aa).

14 PPR repeats span residues 42–72 (STYLSNHFVNLYSKCGRLSYARAAFYSTEEP), 73–103 (NVFSYNVIVKAYAKDSKIHIARQLFDEIPQP), 104–138 (DTVSYNTLISGYADARETFAAMVLFKRMRKLGFEV), 139–169 (DGFTLSGLIAACCDRVDLIKQLHCFSVSGGF), 172–202 (YSSVNNAFVTYYSKGGLLREAVSVFYGMDEL), 204–238 (DEVSWNSMIVAYGQHKEGAKALALYKEMIFKGFKI), 239–273 (DMFTLASVLNALTSLDHLIGGRQFHGKLIKAGFHQ), 274–307 (NSHVGSGLIDFYSKCGGCDGMYDSEKVFQEILSP), 308–343 (DLVVWNTMISGYSMNEELSEEAVKSFRQMQRIGHRP), 344–378 (DDCSFVCVTSACSNLSSPSQCKQIHGLAIKSHIPS), 380–410 (RISVNNALISLYYKSGNLQDARWVFDRMPEL), 411–445 (NAVSFNCMIKGYAQHGHGTEALLLYQRMLDSGIAP), 446–476 (NKITFVAVLSACAHCGKVDEGQEYFNTMKET), and 482–512 (EAEHYSCMIDLLGRAGKLEEAERFIDAMPYK). The type E motif stretch occupies residues 517–592 (AWAALLGACR…KPGCSWIEVK (76 aa)). Residues 593–623 (KKKHVFVAEDWSHPMIREVNEYLEEMMKKMK) are type E(+) motif. The interval 624–721 (KVGYVMDKKW…DGKCSCGDYW (98 aa)) is type DYW motif.

This sequence belongs to the PPR family. PCMP-H subfamily.

This is Pentatricopeptide repeat-containing protein At3g49710 (PCMP-H79) from Arabidopsis thaliana (Mouse-ear cress).